The sequence spans 932 residues: 2-oxoglutarate dehydrogenase E1 component (932 aa).

This sequence belongs to the alpha-ketoglutarate dehydrogenase family. In terms of assembly, homodimer. Part of the 2-oxoglutarate dehydrogenase (OGDH) complex composed of E1 (2-oxoglutarate dehydrogenase), E2 (dihydrolipoamide succinyltransferase) and E3 (dihydrolipoamide dehydrogenase); the complex contains multiple copies of the three enzymatic components (E1, E2 and E3). Thiamine diphosphate serves as cofactor.

It carries out the reaction N(6)-[(R)-lipoyl]-L-lysyl-[protein] + 2-oxoglutarate + H(+) = N(6)-[(R)-S(8)-succinyldihydrolipoyl]-L-lysyl-[protein] + CO2. Its function is as follows. E1 component of the 2-oxoglutarate dehydrogenase (OGDH) complex which catalyzes the decarboxylation of 2-oxoglutarate, the first step in the conversion of 2-oxoglutarate to succinyl-CoA and CO(2). This Staphylococcus aureus (strain JH9) protein is 2-oxoglutarate dehydrogenase E1 component.